Here is a 1551-residue protein sequence, read N- to C-terminus: MSIEKVSILGKESIHVGYGIQSHIVEETIKCLASSTYVIISDTNMSKTPTYEKLQDSFQKELAKQRPQSRLLTYLIPPGENHKNRETKAEVEDFLLQQGCTRDTVILAVGGGVIGDMIGFVAATFMRGVRVVQVPTTLLSMVDSSVGGKTAIDTELGKNFIGAFHQPEFVFCDVSFLQTLPKRQLINGMAEVVKTAAIWDETEFTRLESFAKRFLAEISAPTPNLESIKDELIKTVLGSVRVKAFVVSADEKEGGLRNLLNFGHTIGHAIEAILTPEALHGECVSIGMIKEAELSRYLGILPPSAVARLSKCLAAYGLPISVDEKIFSKIIGAKKNNLKIDSLIKKMLIDKKNDGSKIRCVLLESIGKCYESKAHQIFKEDIQVVMTDEVFVHPFANRHPESVSITPPGSKSISNRALILAALGEGTTRIKNLLHSDDTKHMLDAVVLMKGATVSFEDSGDTVVVQGHGGKLFACKEEIYLGNAGTASRFLTAVAALVNSTQDEKSVTLTGNARMQERPIAALVDALTTNGSKVDYLNKQGSLPLKIEAGNGFKGGRIELAATTSSQYVSAILMCAPYAEKEVTLSLVGGKPISQLYIDMTIAMMKDFGVDVTKSETEEYTYHIPKSVYQNPQEYVVESDASSATYPLAFAALTNSSCTIPNIGSSSLQGDARFAVDVLKPMGCTVEQTSKSTTVTGPPIGTLKALPEIDMEPMTDAFLTASVVAAVSQGTTTISGIANQRVKECNRIKAMVDELAKFGVSADETEDGIRIHGVQLRDLKTPGGRGVKTYDDHRVAMSFSLLAGLCKDPVLIQERSTTGKTWPGWWDVLHSKFNAKLEGHEYIRQRSGSLRNGDRSIVIIGMRAAGKTTLSRWLAEHLNFKLLDLDQYLEKKLAVDIKLLVKEKGWDYFREKETEVLNECLEKFGKGHILATGGGIVEGEKPREALKNYTKSGGIVLHLHRDLKETVNFLSKDPTRPAYSDDIEEVWKRREKWYHECSNYHFYSTHCTSEAEFANLKLVFAKFVSKITGDDTFVLPATRSTFVTLTYPDLRKVPSLIKDVSETSNAVELRVDLLANQETAYIAEQIGLLRSVATDLPILYTVRTKSQCGQYPDEDEEGMRKLLMFGLKMGVDIIDLQLISSPSTIAEVISKRGHTKIIASHHDFTGDLKWDNVEWKNKYAQGVSIDADFVKLVGMAKTFDDNLLLENFRRQNTEKPLIGINMGPQGKLSRVLNKVLTPVTHELITDKPIGVGQLSLKEINQALFQIGGLLEKEFWVVGSPVSHSRSPALHNAAYAALGLPYKFDIFETDDAEKVYSQLMQKPTFGGLAVTIPLKLDIKKYCTELSESAKLIGAVNTVTPIADGRKGFLGDNTDWIGIANSFKKADFALASGVSNGLVVGGGGTSRAAIFALHSLGCQKIYLLNRTESKLQDLVDSFPDYDLEILLEKNASSVSIGLVVSCVPGDKPLDETLMKKLDGVLSNNKGDKQTRPLLLEAAYKPRVTPIMELAKEKYDWTVIPGVEMLVNQGEAQFKLHTGYTAPYKVIHSAVLNE.

A 3-dehydroquinate synthase region spans residues 1 to 379 (MSIEKVSILG…YESKAHQIFK (379 aa)). NAD(+)-binding positions include 42–44 (DTN), 80–83 (ENHK), 111–113 (GGV), and D116. R127 serves as a coordination point for 7-phospho-2-dehydro-3-deoxy-D-arabino-heptonate. Residue 136–137 (TT) participates in NAD(+) binding. 7-phospho-2-dehydro-3-deoxy-D-arabino-heptonate contacts are provided by D143 and K149. K158 contributes to the NAD(+) binding site. N159 contacts 7-phospho-2-dehydro-3-deoxy-D-arabino-heptonate. Residues 176-179 (FLQT) and N187 each bind NAD(+). E191 is a Zn(2+) binding site. 7-phospho-2-dehydro-3-deoxy-D-arabino-heptonate contacts are provided by residues 191-194 (EVVK) and K243. Residue E253 is the Proton acceptor; for 3-dehydroquinate synthase activity of the active site. 7-phospho-2-dehydro-3-deoxy-D-arabino-heptonate is bound by residues 257 to 261 (RNLLN) and H264. Residue H264 coordinates Zn(2+). Catalysis depends on H268, which acts as the Proton acceptor; for 3-dehydroquinate synthase activity. 2 residues coordinate 7-phospho-2-dehydro-3-deoxy-D-arabino-heptonate: H280 and K351. Residue H280 coordinates Zn(2+). Residues 392 to 835 (VHPFANRHPE…WDVLHSKFNA (444 aa)) form an EPSP synthase region. Positions 854–1044 (DRSIVIIGMR…LPATRSTFVT (191 aa)) are shikimate kinase. 861–868 (GMRAAGKT) lines the ATP pocket. A 3-dehydroquinase region spans residues 1045-1258 (LTYPDLRKVP…IGVGQLSLKE (214 aa)). The Proton acceptor; for 3-dehydroquinate dehydratase activity role is filled by H1162. K1191 (schiff-base intermediate with substrate; for 3-dehydroquinate dehydratase activity) is an active-site residue. The tract at residues 1271-1551 (EKEFWVVGSP…KVIHSAVLNE (281 aa)) is shikimate dehydrogenase.

The protein in the N-terminal section; belongs to the sugar phosphate cyclases superfamily. Dehydroquinate synthase family. This sequence in the 2nd section; belongs to the EPSP synthase family. In the 3rd section; belongs to the shikimate kinase family. It in the 4th section; belongs to the type-I 3-dehydroquinase family. The protein in the C-terminal section; belongs to the shikimate dehydrogenase family. Homodimer. Zn(2+) is required as a cofactor.

The protein resides in the cytoplasm. It carries out the reaction 7-phospho-2-dehydro-3-deoxy-D-arabino-heptonate = 3-dehydroquinate + phosphate. It catalyses the reaction 3-dehydroquinate = 3-dehydroshikimate + H2O. The catalysed reaction is shikimate + NADP(+) = 3-dehydroshikimate + NADPH + H(+). The enzyme catalyses shikimate + ATP = 3-phosphoshikimate + ADP + H(+). It carries out the reaction 3-phosphoshikimate + phosphoenolpyruvate = 5-O-(1-carboxyvinyl)-3-phosphoshikimate + phosphate. It participates in metabolic intermediate biosynthesis; chorismate biosynthesis; chorismate from D-erythrose 4-phosphate and phosphoenolpyruvate: step 2/7. Its pathway is metabolic intermediate biosynthesis; chorismate biosynthesis; chorismate from D-erythrose 4-phosphate and phosphoenolpyruvate: step 3/7. The protein operates within metabolic intermediate biosynthesis; chorismate biosynthesis; chorismate from D-erythrose 4-phosphate and phosphoenolpyruvate: step 4/7. It functions in the pathway metabolic intermediate biosynthesis; chorismate biosynthesis; chorismate from D-erythrose 4-phosphate and phosphoenolpyruvate: step 5/7. It participates in metabolic intermediate biosynthesis; chorismate biosynthesis; chorismate from D-erythrose 4-phosphate and phosphoenolpyruvate: step 6/7. Functionally, the AROM polypeptide catalyzes 5 consecutive enzymatic reactions in prechorismate polyaromatic amino acid biosynthesis. The protein is Pentafunctional AROM polypeptide 1 of Lodderomyces elongisporus (strain ATCC 11503 / CBS 2605 / JCM 1781 / NBRC 1676 / NRRL YB-4239) (Yeast).